The sequence spans 161 residues: Pathogenesis-related protein 1 (161 aa).

The signal sequence occupies residues Met1–Ala26. The SCP domain occupies Leu34 to Tyr149. Disulfide bonds link Cys70-Cys138, Cys113-Cys117, and Cys133-Cys147.

This sequence belongs to the CRISP family.

The protein resides in the secreted. The protein localises to the extracellular space. It localises to the apoplast. Its function is as follows. Partially responsible for acquired pathogen resistance. The chain is Pathogenesis-related protein 1 from Arabidopsis thaliana (Mouse-ear cress).